Consider the following 105-residue polypeptide: Large ribosomal subunit protein uL24 (105 aa).

This sequence belongs to the universal ribosomal protein uL24 family. In terms of assembly, part of the 50S ribosomal subunit.

In terms of biological role, one of two assembly initiator proteins, it binds directly to the 5'-end of the 23S rRNA, where it nucleates assembly of the 50S subunit. One of the proteins that surrounds the polypeptide exit tunnel on the outside of the subunit. This Staphylococcus carnosus (strain TM300) protein is Large ribosomal subunit protein uL24.